The chain runs to 64 residues: Conotoxin Cal6.26 (64 aa).

An N-terminal signal peptide occupies residues 1-22; that stretch reads MKLTCVMIVAVLVLTVCKVVTS. 3 disulfide bridges follow: Cys-32–Cys-50, Cys-40–Cys-54, and Cys-49–Cys-60.

In terms of tissue distribution, expressed by the venom duct.

The protein resides in the secreted. In terms of biological role, probable neurotoxin. The polypeptide is Conotoxin Cal6.26 (Californiconus californicus (California cone)).